A 321-amino-acid chain; its full sequence is uncharacterized protein (321 aa).

This is an uncharacterized protein from Acanthamoeba polyphaga mimivirus (APMV).